The sequence spans 880 residues: Alanine--tRNA ligase (880 aa).

Zn(2+) is bound by residues histidine 563, histidine 567, cysteine 665, and histidine 669.

It belongs to the class-II aminoacyl-tRNA synthetase family. The cofactor is Zn(2+).

The protein resides in the cytoplasm. The catalysed reaction is tRNA(Ala) + L-alanine + ATP = L-alanyl-tRNA(Ala) + AMP + diphosphate. In terms of biological role, catalyzes the attachment of alanine to tRNA(Ala) in a two-step reaction: alanine is first activated by ATP to form Ala-AMP and then transferred to the acceptor end of tRNA(Ala). Also edits incorrectly charged Ser-tRNA(Ala) and Gly-tRNA(Ala) via its editing domain. The polypeptide is Alanine--tRNA ligase (Desulforudis audaxviator (strain MP104C)).